The primary structure comprises 3004 residues: Guanylate cyclase beta (3004 aa).

The Cytoplasmic segment spans residues 1-66; the sequence is MKETDKIKSE…FSLYNFIRRL (66 aa). The chain crosses the membrane as a helical span at residues 67-87; that stretch reads ISLDAVIVYTLFMTVYIFSEI. The Extracellular segment spans residues 88–94; the sequence is SQGITKK. A helical membrane pass occupies residues 95–115; the sequence is YLFVDTAISLFLNIGILVVIE. Residues 116–300 are Cytoplasmic-facing; the sequence is SLFELKLLKD…TFCIKMNNVV (185 aa). The chain crosses the membrane as a helical span at residues 301–321; sequence YYLIFMYILFVLLSIIIKAIF. The Extracellular portion of the chain corresponds to 322 to 334; sequence YRKGKLLENSNDT. N-linked (GlcNAc...) asparagine glycosylation occurs at Asn-332. The chain crosses the membrane as a helical span at residues 335 to 355; the sequence is FFTVLEDFIGLYILVLPVMLY. Residues 356–991 lie on the Cytoplasmic side of the membrane; sequence SEKSLIYIIQ…GRLNRFSLCR (636 aa). The chain crosses the membrane as a helical span at residues 992–1012; it reads AFLWIIYLKVMIGSFYFFHNF. At 1013 to 1022 the chain is on the extracellular side; the sequence is DNFFSGSSIS. The chain crosses the membrane as a helical span at residues 1023–1043; the sequence is SILYSQTAFAIFHYSLIVAFA. The Cytoplasmic portion of the chain corresponds to 1044-1072; it reads SYEIDIPYKFIRNFPYIYQLARRKYFLNN. The helical transmembrane segment at 1073–1093 threads the bilayer; it reads TIIFLNIVESIFSSFISYYIL. Residues 1094–1105 are Extracellular-facing; it reads RGNLFNLITHRK. The chain crosses the membrane as a helical span at residues 1106 to 1126; sequence FTFHIFVLNFFLISEKILLFS. Residues 1127–1130 lie on the Cytoplasmic side of the membrane; sequence KTWH. A helical membrane pass occupies residues 1131–1151; it reads IFFFIMTIIIVSILFIYINIY. At 1152-1171 the chain is on the extracellular side; that stretch reads TLVDCLITGKCEFSLFDPED. Residues 1172–1192 traverse the membrane as a helical segment; sequence SYFWISLLPILYINFIIDKFM. The Cytoplasmic segment spans residues 1193–1297; sequence KFVKNKIYPD…YEKRNKLKLR (105 aa). Residues 1298–1318 traverse the membrane as a helical segment; it reads IIILLLFIIFLITFTIQIIIS. Topologically, residues 1319-1327 are extracellular; it reads KFIEKKLHS. The helical transmembrane segment at 1328–1348 threads the bilayer; it reads LSYLTVIYYIVAVLYLIKILI. At 1349–1353 the chain is on the cytoplasmic side; that stretch reads RNKTN. A helical membrane pass occupies residues 1354-1374; that stretch reads YTYFYIIGKLLLVIGYLLEIS. Residues 1375–1394 are Extracellular-facing; the sequence is ENSVNNIINMLVTYSFTVCY. The helical transmembrane segment at 1395–1415 threads the bilayer; sequence IFFISFKILEGLVMCIIILSI. Topologically, residues 1416 to 1457 are cytoplasmic; the sequence is AIWVYYHKNNNLNAMCTDFCDNPYTSLDNLEYINISCICKQQ. The helical transmembrane segment at 1458 to 1478 threads the bilayer; that stretch reads IFTFLICTLSFTLICLFMKYY. Topologically, residues 1479-1500 are extracellular; that stretch reads EIYYLKKKFLTRYKQKVNLGKQ. Residues 1501–1521 traverse the membrane as a helical segment; it reads IEILHTMLPSFLVEYLLVSDP. Over 1522 to 2563 the chain is Cytoplasmic; the sequence is KADGIMVGKN…EIINIDLTKK (1042 aa). A Guanylate cyclase 1 domain is found at 1541–1696; the sequence is SVIFCDIDDF…DTVNTASRMK (156 aa). Positions 2463–2476 are enriched in polar residues; it reads TMSNSKSGQTNITT. The interval 2463 to 2491 is disordered; that stretch reads TMSNSKSGQTNITTDNKKSQIKKNGDVNK. The span at 2477-2488 shows a compositional bias: basic and acidic residues; sequence DNKKSQIKKNGD. Residues 2564 to 2584 traverse the membrane as a helical segment; it reads LIIIFVISELILSLCNVIELS. Over 2585 to 2594 the chain is Extracellular; the sequence is YYENKETPND. Residues 2595-2615 form a helical membrane-spanning segment; that stretch reads FIVIIWLIRSIYLFTITFIWL. Topologically, residues 2616–2634 are cytoplasmic; it reads LLKTKLKEYKDNSSKMMWT. A helical membrane pass occupies residues 2635 to 2655; the sequence is TFILNIFLSSWGIIMIDLACI. Topologically, residues 2656 to 2667 are extracellular; the sequence is HYSNLVGNSRER. A helical membrane pass occupies residues 2668–2688; the sequence is SIFFMKDATELIISMQLIFVK. Topologically, residues 2689–2695 are cytoplasmic; that stretch reads NMLFKHK. The chain crosses the membrane as a helical span at residues 2696-2716; the sequence is FFFFVFFFVFLMYSFFKLFVI. Residues 2717–2722 lie on the Extracellular side of the membrane; the sequence is HVCELR. The helical transmembrane segment at 2723-2743 threads the bilayer; that stretch reads ICCSILLILSINILYFWYSEY. Residues 2744 to 3004 are Cytoplasmic-facing; the sequence is LDRTQYIIKR…KLREQNKVKG (261 aa). The region spanning 2793–2927 is the Guanylate cyclase 2 domain; sequence AFLFADIVGF…LDVLIANHIE (135 aa). Asp-2798, Ile-2799, and Asp-2842 together coordinate Mg(2+).

The protein in the N-terminal section; belongs to the cation transport ATPase (P-type) (TC 3.A.3) family. Type IV subfamily. It in the C-terminal section; belongs to the adenylyl cyclase class-4/guanylyl cyclase family. Mg(2+) is required as a cofactor. Requires Mn(2+) as cofactor.

It is found in the membrane. It catalyses the reaction GTP = 3',5'-cyclic GMP + diphosphate. In terms of biological role, catalyzes the synthesis of the second messenger cGMP from GTP. Probably by regulating cGMP production, required for ookinete gliding motility, which is necessary for the ookinete to traverse the midgut epithelium of the mosquito. This is Guanylate cyclase beta from Plasmodium berghei (strain Anka).